Here is a 231-residue protein sequence, read N- to C-terminus: Phosphatidate cytidylyltransferase (231 aa).

The next 6 helical transmembrane spans lie at 33-53 (FVVA…LVAI), 67-87 (IMYL…LIFL), 95-115 (WLIM…MIGG), 133-153 (WSGL…ISFI), 167-187 (IYLF…DLFI), and 206-226 (HGGV…LFFI).

This sequence belongs to the CDS family.

The protein localises to the cell membrane. The catalysed reaction is a 1,2-diacyl-sn-glycero-3-phosphate + CTP + H(+) = a CDP-1,2-diacyl-sn-glycerol + diphosphate. It participates in phospholipid metabolism; CDP-diacylglycerol biosynthesis; CDP-diacylglycerol from sn-glycerol 3-phosphate: step 3/3. This chain is Phosphatidate cytidylyltransferase (cdsA), found in Rickettsia bellii (strain RML369-C).